The chain runs to 391 residues: uncharacterized protein (391 aa).

Belongs to the mimivirus L17x/L18x family.

This is an uncharacterized protein from Acanthamoeba polyphaga (Amoeba).